The sequence spans 486 residues: Probable glycine dehydrogenase (decarboxylating) subunit 2 (486 aa).

Lys269 carries the N6-(pyridoxal phosphate)lysine modification.

This sequence belongs to the GcvP family. C-terminal subunit subfamily. As to quaternary structure, the glycine cleavage system is composed of four proteins: P, T, L and H. In this organism, the P 'protein' is a heterodimer of two subunits. It depends on pyridoxal 5'-phosphate as a cofactor.

The enzyme catalyses N(6)-[(R)-lipoyl]-L-lysyl-[glycine-cleavage complex H protein] + glycine + H(+) = N(6)-[(R)-S(8)-aminomethyldihydrolipoyl]-L-lysyl-[glycine-cleavage complex H protein] + CO2. The glycine cleavage system catalyzes the degradation of glycine. The P protein binds the alpha-amino group of glycine through its pyridoxal phosphate cofactor; CO(2) is released and the remaining methylamine moiety is then transferred to the lipoamide cofactor of the H protein. In Chlorobaculum tepidum (strain ATCC 49652 / DSM 12025 / NBRC 103806 / TLS) (Chlorobium tepidum), this protein is Probable glycine dehydrogenase (decarboxylating) subunit 2.